An 88-amino-acid polypeptide reads, in one-letter code: Small ribosomal subunit protein bS20 (88 aa).

Positions 1-26 (MANTAQARKRARQNTKRRQNSASQRS) are disordered. The span at 7–19 (ARKRARQNTKRRQ) shows a compositional bias: basic residues.

The protein belongs to the bacterial ribosomal protein bS20 family.

Its function is as follows. Binds directly to 16S ribosomal RNA. This Psychrobacter arcticus (strain DSM 17307 / VKM B-2377 / 273-4) protein is Small ribosomal subunit protein bS20.